The sequence spans 479 residues: Ribosomal RNA small subunit methyltransferase F (479 aa).

S-adenosyl-L-methionine is bound by residues 125–131 (AAAPGSK), Glu149, Asp176, and Asp194. Cys247 serves as the catalytic Nucleophile.

This sequence belongs to the class I-like SAM-binding methyltransferase superfamily. RsmB/NOP family.

The protein resides in the cytoplasm. It catalyses the reaction cytidine(1407) in 16S rRNA + S-adenosyl-L-methionine = 5-methylcytidine(1407) in 16S rRNA + S-adenosyl-L-homocysteine + H(+). Its function is as follows. Specifically methylates the cytosine at position 1407 (m5C1407) of 16S rRNA. The chain is Ribosomal RNA small subunit methyltransferase F from Salmonella arizonae (strain ATCC BAA-731 / CDC346-86 / RSK2980).